The sequence spans 2321 residues: Neurogenic locus notch homolog protein 3 (2321 aa).

Basic residues predominate over residues 1 to 14 (MGPGARGRRRRRRP). A disordered region spans residues 1 to 26 (MGPGARGRRRRRRPMSPPPPPPPVRA). The N-terminal stretch at 1–39 (MGPGARGRRRRRRPMSPPPPPPPVRALPLLLLLAGPGAA) is a signal peptide. Over residues 15–25 (MSPPPPPPPVR) the composition is skewed to pro residues. EGF-like domains are found at residues 40-77 (APPCLDGSPCANGGRCTQLPSREAACLCPPGWVGERCQ), 78-118 (LEDP…PDCS), and 119-156 (LPDPCLSSPCAHGARCSVGPDGRFLCSCPPGYQGRSCR). Topologically, residues 40 to 1643 (APPCLDGSPC…LEPPEPSVPL (1604 aa)) are extracellular. 99 cysteine pairs are disulfide-bonded: C43-C55, C49-C65, C67-C76, C82-C93, C87-C106, C108-C117, C123-C134, C128-C144, C146-C155, C162-C174, C168-C183, C185-C194, C201-C212, C206-C222, C224-C233, C240-C251, C245-C260, C262-C271, C278-C291, C285-C300, C302-C311, C318-C329, C323-C338, C340-C349, C355-C366, C360-C377, C379-C388, C395-C408, C402-C417, C419-C428, C435-C446, C440-C455, C457-C466, C473-C484, C478-C493, C495-C504, C511-C522, C516-C531, C533-C542, C549-C559, C554-C568, C570-C579, C586-C597, C591-C606, C608-C617, C624-C634, C629-C643, C645-C654, C661-C672, C666-C681, C683-C692, C699-C709, C704-C718, C720-C729, C738-C749, C743-C758, C760-C769, C775-C786, C780-C796, C798-C807, C814-C826, C820-C835, C837-C846, C853-C864, C858-C873, C875-C884, C891-C901, C896-C910, C912-C921, C928-C939, C933-C948, C950-C959, C966-C977, C971-C986, C988-C997, C1004-C1015, C1009-C1022, C1024-C1033, C1040-C1061, C1055-C1070, C1072-C1081, C1088-C1099, C1093-C1108, C1110-C1119, C1126-C1137, C1131-C1146, C1148-C1157, C1164-C1182, C1176-C1191, C1193-C1202, C1209-C1222, C1214-C1232, C1234-C1243, C1250-C1261, C1255-C1275, C1277-C1286, C1293-C1304, C1298-C1313, and C1315-C1324. Residues 158–195 (DVDECRVGEPCRHGGTCLNTPGSFRCQCPAGYTGPLCE) enclose the EGF-like 4; calcium-binding domain. The EGF-like 5 domain occupies 197 to 234 (PAVPCAPSPCRNGGTCRQSGDLTYDCACLPGFEGQNCE). Residues 236-272 (NVDDCPGHRCLNGGTCVDGVNTYNCQCPPEWTGQFCT) form the EGF-like 6; calcium-binding domain. The EGF-like 7 domain maps to 274–312 (DVDECQLQPNACHNGGTCFNTLGGHSCVCVNGWTGESCS). Residues 314-350 (NIDDCATAVCFHGATCHDRVASFYCACPMGKTGLLCH) enclose the EGF-like 8; calcium-binding domain. The 39-residue stretch at 351–389 (LDDACVSNPCHEDAICDTNPVNGRAICTCPPGFTGGACD) folds into the EGF-like 9 domain. Residues 391–429 (DVDECSIGANPCEHLGRCVNTQGSFLCQCGRGYTGPRCE) form the EGF-like 10; calcium-binding domain. Residues 431 to 467 (DVNECLSGPCRNQATCLDRIGQFTCICMAGFTGTYCE) form the EGF-like 11; calcium-binding domain. An EGF-like 12; calcium-binding domain is found at 469–505 (DIDECQSSPCVNGGVCKDRVNGFSCTCPSGFSGSTCQ). Residues 507–543 (DVDECASTPCRNGAKCVDQPDGYECRCAEGFEGTLCD) enclose the EGF-like 13; calcium-binding domain. The EGF-like 14; calcium-binding domain maps to 545 to 580 (NVDDCSPDPCHHGRCVDGIASFSCACAPGYTGTRCE). Residues 582–618 (QVDECRSQPCRHGGKCLDLVDKYLCRCPSGTTGVNCE) form the EGF-like 15; calcium-binding domain. The region spanning 620–655 (NIDDCASNPCTFGVCRDGINRYDCVCQPGFTGPLCN) is the EGF-like 16; calcium-binding domain. One can recognise an EGF-like 17; calcium-binding domain in the interval 657-693 (EINECASSPCGEGGSCVDGENGFRCLCPPGSLPPLCL). EGF-like domains are found at residues 695-730 (PSHPCAHEPCSHGICYDAPGGFRCVCEPGWSGPRCS), 734-770 (ARDACESQPCRAGGTCSSDGMGFHCTCPPGVQGRQCE), and 771-808 (LLSPCTPNPCEHGGRCESAPGQLPVCSCPQGWQGPRCQ). The 38-residue stretch at 810–847 (DVDECAGPAPCGPHGICTNLAGSFSCTCHGGYTGPSCD) folds into the EGF-like 21; calcium-binding domain. An EGF-like 22; calcium-binding domain is found at 849 to 885 (DINDCDPNPCLNGGSCQDGVGSFSCSCLPGFAGPRCA). The region spanning 887–922 (DVDECLSNPCGPGTCTDHVASFTCTCPPGYGGFHCE) is the EGF-like 23; calcium-binding domain. EGF-like domains lie at 924–960 (DLPDCSPSSCFNGGTCVDGVNSFSCLCRPGYTGAHCQ), 962–998 (EADPCLSRPCLHGGVCSAAHPGFRCTCLESFTGPQCQ), 1000–1034 (LVDWCSRQPCQNGGRCVQTGAYCLCPPGWSGRLCD), 1036–1082 (RSLP…SHCE), and 1084–1120 (EVDPCLAQPCQHGGTCRGYMGGYMCECLPGYNGDNCE). The EGF-like 29; calcium-binding domain occupies 1122-1158 (DVDECASQPCQHGGSCIDLVARYLCSCPPGTLGVLCE). One can recognise an EGF-like 30; calcium-binding domain in the interval 1160 to 1203 (NEDDCGPGPPLDSGPRCLHNGTCVDLVGGFRCTCPPGYTGLRCE). Residue N1179 is glycosylated (N-linked (GlcNAc...) asparagine). EGF-like domains follow at residues 1205–1244 (DINECRSGACHAAHTRDCLQDPGGGFRCLCHAGFSGPRCQ), 1246–1287 (VLSP…PRCE), 1289–1325 (VARSCRELQCPVGVPCQQTPRGPRCACPPGLSGPSCR), and 1335–1373 (SNASCAAAPCLHGGSCRPAPLAPFFRCACAQGWTGPRCE). An N-linked (GlcNAc...) asparagine glycan is attached at N1336. 12 disulfide bridges follow: C1339–C1350, C1344–C1361, C1363–C1372, C1387–C1410, C1392–C1405, C1401–C1417, C1428–C1451, C1433–C1446, C1442–C1458, C1467–C1493, C1475–C1488, and C1484–C1500. LNR repeat units follow at residues 1387–1427 (CPRA…PWRQ), 1428–1458 (CEALQCWRLFNNSRCDPACSSPACLYDNFDC), and 1467–1505 (CNPVYEKYCADHFADGRCDQGCNTEECGWDGLDCASEVP). Residue N1438 is glycosylated (N-linked (GlcNAc...) asparagine). A helical membrane pass occupies residues 1644-1664 (LPLLVAGAVLLLVILVLGVMV). Over 1665–2321 (ARRKREHSTL…EVTPKRQVLA (657 aa)) the chain is Cytoplasmic. 5 ANK repeats span residues 1838–1867 (TGETALHLAARYARADAAKRLLDAGADTNA), 1871–1901 (SGRTPLHTAVTADAQGVFQILIRNRSTDLDA), 1905–1934 (DGSTALILAARLAVEGMVEELIASHADVNA), 1938–1967 (LGKSALHWAAAVNNVEATLALLKNGANKDM), and 1971–2000 (KEETPLFLAAREGSYEAAKLLLDHFANREI). The interval 2024 to 2120 (LDQPSGPRSP…FGGPPASPGG (97 aa)) is disordered. The segment covering 2039–2053 (LGPLLCPPGAFLPGL) has biased composition (low complexity). At R2174 the chain carries Omega-N-methylarginine. The interval 2190 to 2321 (APGPQLLNPG…EVTPKRQVLA (132 aa)) is disordered. The segment covering 2269-2289 (STPSPATATGAMATTTGALPA) has biased composition (low complexity). Polar residues predominate over residues 2296–2308 (VPSSLAQAQTQLG).

It belongs to the NOTCH family. Heterodimer of a C-terminal fragment N(TM) and a N-terminal fragment N(EC) which are probably linked by disulfide bonds. Interacts with MAML1, MAML2 and MAML3 which act as transcriptional coactivators for NOTCH3. Interacts with PSMA1. Interacts with HIF1AN. In terms of processing, synthesized in the endoplasmic reticulum as an inactive form which is proteolytically cleaved by a furin-like convertase in the trans-Golgi network before it reaches the plasma membrane to yield an active, ligand-accessible form. Cleavage results in a C-terminal fragment N(TM) and a N-terminal fragment N(EC). Following ligand binding, it is cleaved by TNF-alpha converting enzyme (TACE) to yield a membrane-associated intermediate fragment called notch extracellular truncation (NEXT). This fragment is then cleaved by presenilin dependent gamma-secretase to release a notch-derived peptide containing the intracellular domain (NICD) from the membrane. Post-translationally, phosphorylated. Hydroxylated by HIF1AN. In terms of tissue distribution, ubiquitously expressed in fetal and adult tissues.

Its subcellular location is the cell membrane. The protein localises to the nucleus. Functionally, functions as a receptor for membrane-bound ligands Jagged1, Jagged2 and Delta1 to regulate cell-fate determination. Upon ligand activation through the released notch intracellular domain (NICD) it forms a transcriptional activator complex with RBPJ/RBPSUH and activates genes of the enhancer of split locus. Affects the implementation of differentiation, proliferation and apoptotic programs. The polypeptide is Neurogenic locus notch homolog protein 3 (NOTCH3) (Homo sapiens (Human)).